Reading from the N-terminus, the 453-residue chain is Beta-agarase AgaB34 (453 aa).

The signal sequence occupies residues 1 to 23; the sequence is MKGFTKHSILMACSIGLAINATA. In terms of domain architecture, GH16 spans 24-301; it reads ADWDNIPIPA…WIRVYKPTGG (278 aa). Residue Glu-147 is the Nucleophile of the active site. Glu-152 serves as the catalytic Proton donor. The region spanning 313-453 is the Ricin B-type lectin domain; that stretch reads PSGYTNLQLA…GATNQRFKFL (141 aa). Cystine bridges form between Cys-327/Cys-346, Cys-375/Cys-394, and Cys-423/Cys-442.

It belongs to the glycosyl hydrolase 16 family.

The protein resides in the secreted. The catalysed reaction is Hydrolysis of (1-&gt;4)-beta-D-galactosidic linkages in agarose, giving the tetramer as the predominant product.. In Agarivorans albus, this protein is Beta-agarase AgaB34.